Reading from the N-terminus, the 320-residue chain is Pyrroline-5-carboxylate reductase 2 (320 aa).

Ser-2 bears the N-acetylserine mark. NADP(+) is bound by residues 6 to 11 and Ser-34; that span reads IGAGQL. 9 residues coordinate NADPH: Ala-8, Gln-10, Leu-11, Ser-34, Glu-36, Asn-56, Val-70, Lys-71, and Ala-97. Residues Asn-56, 69–72, and 95–97 each bind NADP(+); these read AVKP and CAA. Glu-164 is a binding site for L-proline. Asn-230 contacts NADPH. Residues Ala-237 and Thr-238 each coordinate L-proline. The disordered stretch occupies residues 298–320; it reads TTLTPTSSGKLLTRSPVPGGKKD. The residue at position 304 (Ser-304) is a Phosphoserine.

The protein belongs to the pyrroline-5-carboxylate reductase family. As to quaternary structure, homodecamer; composed of 5 homodimers. Interacts with LTO1.

Its subcellular location is the cytoplasm. It is found in the mitochondrion. The catalysed reaction is L-proline + NADP(+) = (S)-1-pyrroline-5-carboxylate + NADPH + 2 H(+). It carries out the reaction L-proline + NAD(+) = (S)-1-pyrroline-5-carboxylate + NADH + 2 H(+). Its pathway is amino-acid biosynthesis; L-proline biosynthesis; L-proline from L-glutamate 5-semialdehyde: step 1/1. In terms of biological role, oxidoreductase that catalyzes the last step in proline biosynthesis, which corresponds to the reduction of pyrroline-5-carboxylate to L-proline using NAD(P)H. At physiologic concentrations, has higher specific activity in the presence of NADH. Involved in cellular response to oxidative stress. In some cell types, such as erythrocytes, its primary function may be the generation of NADP(+). This Bos taurus (Bovine) protein is Pyrroline-5-carboxylate reductase 2 (PYCR2).